Here is a 122-residue protein sequence, read N- to C-terminus: Large ribosomal subunit protein bL12 (122 aa).

It belongs to the bacterial ribosomal protein bL12 family. As to quaternary structure, homodimer. Part of the ribosomal stalk of the 50S ribosomal subunit. Forms a multimeric L10(L12)X complex, where L10 forms an elongated spine to which 2 to 4 L12 dimers bind in a sequential fashion. Binds GTP-bound translation factors.

Functionally, forms part of the ribosomal stalk which helps the ribosome interact with GTP-bound translation factors. Is thus essential for accurate translation. This Vibrio campbellii (strain ATCC BAA-1116) protein is Large ribosomal subunit protein bL12.